A 300-amino-acid polypeptide reads, in one-letter code: Secreted mono- and diacylglycerol lipase LIP4 (300 aa).

The signal sequence occupies residues 1–16 (MRFLAFLLCLVPLALC). Cysteine 54 and cysteine 293 are disulfide-bonded. Catalysis depends on serine 167, which acts as the Nucleophile. Aspartate 224 is a catalytic residue.

The protein belongs to the AB hydrolase superfamily. Lipase family. Class 3 subfamily.

Its subcellular location is the secreted. It catalyses the reaction a monoacylglycerol + H2O = glycerol + a fatty acid + H(+). It carries out the reaction a diacylglycerol + H2O = a monoacylglycerol + a fatty acid + H(+). Functionally, secreted lipase involved in Dandruff and seborrheic dermatitis (D/SD) probably via lipase-mediated breakdown of sebaceous lipids and release of irritating free fatty acids. Shows activity against monoglyceride and diglyceride substrates. Due to an absence of fatty acid synthase genes in Malassezia species, secretory lipases are essential for the yeast to generate free fatty acids from degradation of sebum and assimilate them as lipid sources for growth. Plays an essential role at the pathogen-host interface during disease progression. The chain is Secreted mono- and diacylglycerol lipase LIP4 from Malassezia restricta (Seborrheic dermatitis infection agent).